The primary structure comprises 311 residues: MHPAPDMSLWQGRIDSQEGAGALRWHQWIRPYHESAGAASVLLGFASDEGVRRNQGRQGARQGPPALRRALANLAWHGEQALYDAGDIEAAEDLEGAQERYARRVAELLGRGHQVVGLGGGHEIAYASFSGLAHHLGRDGGTPRIGILNFDAHFDLRHAEQASSGTPFRQIAEHCEASGWPFAYCCLGVSRLSNTAALFDQAQRLGVRYLLDRQVQPWNLERSEAFLDSFLQSIEHLYLTVCLDVLPAAQAPGVSAPSAHGVEMSLVEHLVRRAKASGKLRLADIAELNPQFDNDQRTARIAARLVDALVN.

Residues H122, D151, H153, D155, C242, and D244 each contribute to the Mn(2+) site.

The protein belongs to the arginase family. Requires Mn(2+) as cofactor.

The enzyme catalyses N-formimidoyl-L-glutamate + H2O = formamide + L-glutamate. It functions in the pathway amino-acid degradation; L-histidine degradation into L-glutamate; L-glutamate from N-formimidoyl-L-glutamate (hydrolase route): step 1/1. In terms of biological role, catalyzes the conversion of N-formimidoyl-L-glutamate to L-glutamate and formamide. This is Formimidoylglutamase from Pseudomonas paraeruginosa (strain DSM 24068 / PA7) (Pseudomonas aeruginosa (strain PA7)).